We begin with the raw amino-acid sequence, 370 residues long: tRNA-specific 2-thiouridylase MnmA (370 aa).

Residues 12–19 (GLSGGVDS) and Met-38 contribute to the ATP site. An interaction with target base in tRNA region spans residues 98–100 (NPD). Residue Cys-103 is the Nucleophile of the active site. An intrachain disulfide couples Cys-103 to Cys-201. Gly-127 lines the ATP pocket. The segment at 151–153 (KDQ) is interaction with tRNA. The active-site Cysteine persulfide intermediate is Cys-201. An interaction with tRNA region spans residues 319–320 (RY).

Belongs to the MnmA/TRMU family.

It is found in the cytoplasm. It carries out the reaction S-sulfanyl-L-cysteinyl-[protein] + uridine(34) in tRNA + AH2 + ATP = 2-thiouridine(34) in tRNA + L-cysteinyl-[protein] + A + AMP + diphosphate + H(+). Functionally, catalyzes the 2-thiolation of uridine at the wobble position (U34) of tRNA, leading to the formation of s(2)U34. The protein is tRNA-specific 2-thiouridylase MnmA of Verminephrobacter eiseniae (strain EF01-2).